Reading from the N-terminus, the 354-residue chain is Protein-arginine kinase (354 aa).

The 231-residue stretch at 24–254 folds into the Phosphagen kinase C-terminal domain; it reads IVLSSRIRLA…QQIIQQEKMA (231 aa). Residues 27–31, His92, Arg125, 176–180, and 207–212 contribute to the ATP site; these read SSRIR, RASVM, and RGIYGE. Residues 337-342 carry the RDXXRA motif of the pArg binding pocket involved in allosteric regulation motif; that stretch reads RDYRRA.

Belongs to the ATP:guanido phosphotransferase family.

The catalysed reaction is L-arginyl-[protein] + ATP = N(omega)-phospho-L-arginyl-[protein] + ADP + H(+). Its activity is regulated as follows. Appears to be allosterically activated by the binding of pArg-containing polypeptides to the pArg-binding pocket localized in the C-terminal domain of McsB. Its function is as follows. Catalyzes the specific phosphorylation of arginine residues in a large number of proteins. Is part of the bacterial stress response system. Protein arginine phosphorylation has a physiologically important role and is involved in the regulation of many critical cellular processes, such as protein homeostasis, motility, competence, and stringent and stress responses, by regulating gene expression and protein activity. The polypeptide is Protein-arginine kinase (Bacillus thuringiensis subsp. konkukian (strain 97-27)).